The sequence spans 340 residues: DNA-directed RNA polymerase subunit alpha (340 aa).

The alpha N-terminal domain (alpha-NTD) stretch occupies residues 1–236; sequence MLSLSKNWNT…EQLQLFISFE (236 aa). Residues 251 to 340 are alpha C-terminal domain (alpha-CTD); the sequence is FSPYLLKRVD…LSKRYEDSYN (90 aa).

The protein belongs to the RNA polymerase alpha chain family. In terms of assembly, homodimer. The RNAP catalytic core consists of 2 alpha, 1 beta, 1 beta' and 1 omega subunit. When a sigma factor is associated with the core the holoenzyme is formed, which can initiate transcription.

It carries out the reaction RNA(n) + a ribonucleoside 5'-triphosphate = RNA(n+1) + diphosphate. DNA-dependent RNA polymerase catalyzes the transcription of DNA into RNA using the four ribonucleoside triphosphates as substrates. The chain is DNA-directed RNA polymerase subunit alpha from Rickettsia rickettsii (strain Iowa).